Consider the following 116-residue polypeptide: U16-barytoxin-Tl1b (116 aa).

An N-terminal signal peptide occupies residues 1–20 (MKTIIVFLSLLVLATKFGDA). The propeptide occupies 21 to 74 (KEGVNQKQKKEVTQNEFREEYLNEMAAMSLVQQLEAIERALFENEAGRNSRQKR). Intrachain disulfides connect cysteine 75–cysteine 90, cysteine 82–cysteine 95, and cysteine 89–cysteine 110.

The protein belongs to the neurotoxin 14 (magi-1) family. 06 (ICK-Trit) subfamily. In terms of tissue distribution, expressed by the venom gland.

The protein resides in the secreted. Ion channel inhibitor. The chain is U16-barytoxin-Tl1b from Trittame loki (Brush-footed trapdoor spider).